A 1274-amino-acid chain; its full sequence is Protein ECM30 (1274 aa).

3 disordered regions span residues 23–42 (EDADASSPSRTSSPSPSLSV), 405–439 (RRAVSTSSHDNSSSSHASLPSSSSAAYHTKPQTKP), and 494–517 (SSSSSTTRSNSSTTSNGTSNDTSN). 3 stretches are compositionally biased toward low complexity: residues 27–42 (ASSPSRTSSPSPSLSV), 409–432 (STSSHDNSSSSHASLPSSSSAAYH), and 494–515 (SSSSSTTRSNSSTTSNGTSNDT). Residue Ser-635 is modified to Phosphoserine. Over residues 803–822 (NQQHQNQQQGQNDNRGQNQN) the composition is skewed to low complexity. The disordered stretch occupies residues 803 to 842 (NQQHQNQQQGQNDNRGQNQNEDPGQENESPTPYLLFNPAS). A Phosphoserine modification is found at Ser-1065. Residues 1100-1149 (HLRSSSSSSSITLEKTTSNSSSIRTRPNSHHVAPETNNNNSTNGNSNNSS) are disordered. A compositionally biased stretch (polar residues) spans 1110-1125 (ITLEKTTSNSSSIRTR). The segment covering 1135–1149 (TNNNNSTNGNSNNSS) has biased composition (low complexity).

Its subcellular location is the cytoplasm. Seems to be involved in cell wall organization and biogenesis. This Saccharomyces cerevisiae (strain ATCC 204508 / S288c) (Baker's yeast) protein is Protein ECM30 (ECM30).